The sequence spans 152 residues: uncharacterized protein (152 aa).

This is an uncharacterized protein from Rickettsia prowazekii (strain Madrid E).